A 270-amino-acid chain; its full sequence is ES1 protein, mitochondrial (270 aa).

In terms of tissue distribution, expressed specifically in the inner segments of cone photoreceptor cells of the retina (at protein level).

Its subcellular location is the mitochondrion. Plays a role in promoting mitochondrial enlargement in cone photoreceptor cells in a fusion-independent and ATP-dependent manner. This Danio rerio (Zebrafish) protein is ES1 protein, mitochondrial.